A 161-amino-acid polypeptide reads, in one-letter code: 6,7-dimethyl-8-ribityllumazine synthase (161 aa).

5-amino-6-(D-ribitylamino)uracil is bound by residues W31, 63-65 (SFE), and 85-87 (VVI). Residue 90–91 (GT) participates in (2S)-2-hydroxy-3-oxobutyl phosphate binding. H93 (proton donor) is an active-site residue. Residue F118 coordinates 5-amino-6-(D-ribitylamino)uracil. A (2S)-2-hydroxy-3-oxobutyl phosphate-binding site is contributed by R132.

This sequence belongs to the DMRL synthase family.

It catalyses the reaction (2S)-2-hydroxy-3-oxobutyl phosphate + 5-amino-6-(D-ribitylamino)uracil = 6,7-dimethyl-8-(1-D-ribityl)lumazine + phosphate + 2 H2O + H(+). The protein operates within cofactor biosynthesis; riboflavin biosynthesis; riboflavin from 2-hydroxy-3-oxobutyl phosphate and 5-amino-6-(D-ribitylamino)uracil: step 1/2. Functionally, catalyzes the formation of 6,7-dimethyl-8-ribityllumazine by condensation of 5-amino-6-(D-ribitylamino)uracil with 3,4-dihydroxy-2-butanone 4-phosphate. This is the penultimate step in the biosynthesis of riboflavin. The protein is 6,7-dimethyl-8-ribityllumazine synthase of Arthrobacter sp. (strain FB24).